Here is a 689-residue protein sequence, read N- to C-terminus: Long-chain-fatty-acid--CoA ligase 2 (689 aa).

Residue 252-263 coordinates ATP; that stretch reads YTSGSTGKPKGV. The FACS signature appears at 518-567; the sequence is DGWFKTGDVGEIAKGNTLRLIDRKKNIVKSLNGEYIALEKIEAQFFTSPL.

The protein belongs to the ATP-dependent AMP-binding enzyme family. Requires Mg(2+) as cofactor.

The protein localises to the golgi apparatus. It is found in the vacuole membrane. It carries out the reaction a long-chain fatty acid + ATP + CoA = a long-chain fatty acyl-CoA + AMP + diphosphate. Functionally, esterification, concomitant with transport, of endogenous long-chain fatty acids into metabolically active CoA thioesters for subsequent degradation or incorporation into phospholipids. Plays an important role in the determination of viability in the stationary phase. The protein is Long-chain-fatty-acid--CoA ligase 2 (lcf2) of Schizosaccharomyces pombe (strain 972 / ATCC 24843) (Fission yeast).